Reading from the N-terminus, the 717-residue chain is Probable cyclic nucleotide-gated ion channel 5 (717 aa).

At 1–102 the chain is on the cytoplasmic side; sequence MAGKRENFVR…DKFLLYCNKL (102 aa). Residues 103–123 form a helical membrane-spanning segment; sequence FVASCILSVFVDPFFFYLPVI. The Extracellular segment spans residues 124–136; it reads NAESKCLGIDRKL. A helical membrane pass occupies residues 137–157; it reads AITASTLRTFIDVFYLAHMAL. The Cytoplasmic portion of the chain corresponds to 158–190; that stretch reads QLRTAYIAPSSRVFGRGELVIDPAQIAKRYLQR. The helical transmembrane segment at 191-211 threads the bilayer; the sequence is WFIIDFLSVLPLPQIVVWRFL. The Extracellular portion of the chain corresponds to 212–224; the sequence is QSSNGSDVLATKQ. Residues 225 to 245 traverse the membrane as a helical segment; sequence ALLFIVLVQYIPRFLRVLPLT. Topologically, residues 246-265 are cytoplasmic; that stretch reads SELKRTAGVFAETAWAGAAY. Residues 266 to 286 traverse the membrane as a helical segment; sequence YLLLYMLASHIVGAFWYLLAL. At 287–391 the chain is on the extracellular side; the sequence is ERNDACWQEA…GQGLETSTYP (105 aa). The chain crosses the membrane as a helical span at residues 392-412; it reads MEIIFSISLAISGLILFALLI. Over 413–717 the chain is Cytoplasmic; that stretch reads GNMQTYLQSL…KPPEPDFTAD (305 aa). Residues 498–628 and glutamate 569 contribute to the a nucleoside 3',5'-cyclic phosphate site; that span reads LFKS…TFRF. The calmodulin-binding stretch occupies residues 614–629; sequence FRRLHSRQVQHTFRFY. The IQ domain occupies 634 to 663; it reads RTWAACFIQAAWRRYCKRKKMEEAEAEAAA.

This sequence belongs to the cyclic nucleotide-gated cation channel (TC 1.A.1.5) family. As to quaternary structure, homotetramer or heterotetramer.

The protein resides in the cell membrane. In terms of biological role, probable cyclic nucleotide-gated ion channel. The sequence is that of Probable cyclic nucleotide-gated ion channel 5 (CNGC5) from Arabidopsis thaliana (Mouse-ear cress).